The sequence spans 58 residues: MKLSPATKSFIGKTVDISTFAIQWGFVPFVVYLGFKKGAEPMPNGQILPLSAMSLLWG.

The Cytoplasmic portion of the chain corresponds to Met-1 to Asp-16. The chain crosses the membrane as a helical span at residues Ile-17–Phe-35. The Mitochondrial intermembrane portion of the chain corresponds to Lys-36 to Gly-58.

This sequence belongs to the Tom7 family. Forms part of the preprotein translocase complex of the outer mitochondrial membrane (TOM complex).

The protein resides in the mitochondrion outer membrane. The sequence is that of Mitochondrial import receptor subunit TOM7 homolog (tomm-7) from Caenorhabditis elegans.